Here is a 343-residue protein sequence, read N- to C-terminus: Insertion element IS630 uncharacterized 39 kDa protein (343 aa).

This Shigella sonnei protein is Insertion element IS630 uncharacterized 39 kDa protein.